The chain runs to 306 residues: Homeobox protein CUP9 (306 aa).

The disordered stretch occupies residues Pro75 to Lys123. The segment covering Ser79–Ser96 has biased composition (low complexity). The span at Lys97–Gly110 shows a compositional bias: polar residues. Positions Asn162–Asp224 form a DNA-binding region, homeobox; TALE-type.

The protein belongs to the TALE/CUP9 homeobox family.

The protein resides in the nucleus. Its function is as follows. Probable DNA-binding protein which plays a role in protecting yeast cells against copper toxicity. May regulate the expression of important copper homeostatic genes. This Saccharomyces cerevisiae (strain ATCC 204508 / S288c) (Baker's yeast) protein is Homeobox protein CUP9 (CUP9).